The chain runs to 616 residues: Chaperone protein HscA (616 aa).

It belongs to the heat shock protein 70 family.

In terms of biological role, chaperone involved in the maturation of iron-sulfur cluster-containing proteins. Has a low intrinsic ATPase activity which is markedly stimulated by HscB. Involved in the maturation of IscU. The chain is Chaperone protein HscA from Escherichia coli O17:K52:H18 (strain UMN026 / ExPEC).